The following is a 259-amino-acid chain: 14-3-3-like protein (259 aa).

Residues 238–259 are disordered; it reads MQDPAAGDDREGADMKVEDAEP. The segment covering 244–259 has biased composition (basic and acidic residues); the sequence is GDDREGADMKVEDAEP.

Belongs to the 14-3-3 family.

The chain is 14-3-3-like protein from Chlamydomonas reinhardtii (Chlamydomonas smithii).